We begin with the raw amino-acid sequence, 305 residues long: tRNA dimethylallyltransferase (305 aa).

Residue 9–16 (GPTASGKS) participates in ATP binding. 11–16 (TASGKS) serves as a coordination point for substrate. Residues 34 to 37 (DSKQ) form an interaction with substrate tRNA region.

It belongs to the IPP transferase family. In terms of assembly, monomer. Requires Mg(2+) as cofactor.

It carries out the reaction adenosine(37) in tRNA + dimethylallyl diphosphate = N(6)-dimethylallyladenosine(37) in tRNA + diphosphate. In terms of biological role, catalyzes the transfer of a dimethylallyl group onto the adenine at position 37 in tRNAs that read codons beginning with uridine, leading to the formation of N6-(dimethylallyl)adenosine (i(6)A). This is tRNA dimethylallyltransferase from Anaplasma marginale (strain Florida).